The chain runs to 1323 residues: Clustered mitochondria protein homolog (1323 aa).

One copy of the TPR 1 repeat lies at 103–141 (KEKPYNLAAIYDHLNKFREVIGLHFLDKYSSEVGVLSGV). Residues 149–186 (LQDVKETEPETQDDKDKETDETKSTKEDSNQTEEKKSE) form a disordered region. Positions 150–186 (QDVKETEPETQDDKDKETDETKSTKEDSNQTEEKKSE) are enriched in basic and acidic residues. In terms of domain architecture, Clu spans 351 to 608 (FANQPDASRS…RATPLDIEFI (258 aa)). The TPR 2 repeat unit spans residues 530-563 (CYGLSTDGSKIFSDSSFENVLKPIAEAFHLKPHP). The segment covering 764–801 (NEEEISKRKEESEKKATEGKDQDKEEEKANDNEKNKED) has biased composition (basic and acidic residues). The disordered stretch occupies residues 764-808 (NEEEISKRKEESEKKATEGKDQDKEEEKANDNEKNKEDDKEEVSN). 4 TPR repeats span residues 1042–1076 (LSVY…KSEA), 1099–1132 (ITAY…WTLV), 1141–1174 (VNTY…STKL), and 1183–1216 (GMLR…FTKF). The interval 1250-1323 (KALAQQASAS…KKSNNKKSKK (74 aa)) is disordered. Residues 1308 to 1323 (PKKQLKKKSNNKKSKK) are compositionally biased toward basic residues.

This sequence belongs to the CLU family. As to quaternary structure, may associate with the eukaryotic translation initiation factor 3 (eIF-3) complex.

Its subcellular location is the cytoplasm. MRNA-binding protein involved in proper cytoplasmic distribution of mitochondria. The polypeptide is Clustered mitochondria protein homolog (Debaryomyces hansenii (strain ATCC 36239 / CBS 767 / BCRC 21394 / JCM 1990 / NBRC 0083 / IGC 2968) (Yeast)).